We begin with the raw amino-acid sequence, 127 residues long: Nuclear transport factor 2 (127 aa).

One can recognise an NTF2 domain in the interval 11 to 124 (VGKQFVEHYY…FLLINDFFRL (114 aa)).

Its subcellular location is the cytoplasm. The protein resides in the cytosol. It is found in the nucleus outer membrane. The protein localises to the nucleus. It localises to the nuclear pore complex. Its subcellular location is the nucleus inner membrane. The protein resides in the nucleoplasm. Functionally, mediates the import of GDP-bound RAN from the cytoplasm into the nucleus which is essential for the function of RAN in cargo receptor-mediated nucleocytoplasmic transport. Thereby, plays indirectly a more general role in cargo receptor-mediated nucleocytoplasmic transport. Interacts with GDP-bound RAN in the cytosol, recruits it to the nuclear pore complex via its interaction with nucleoporins and promotes its nuclear import. The chain is Nuclear transport factor 2 from Dictyostelium discoideum (Social amoeba).